A 214-amino-acid polypeptide reads, in one-letter code: Variable small protein 24 (214 aa).

A signal peptide spans 1–18 (MRKRISAIIMTLFMVFMS). C19 carries the N-palmitoyl cysteine lipid modification. C19 carries S-diacylglycerol cysteine lipidation. The tract at residues 146–172 (TELGKKDASDDDTKKAIKKDNSDKTKG) is disordered.

It belongs to the variable small protein (Vsp) family.

It localises to the cell outer membrane. In terms of biological role, the Vlp and Vsp proteins are antigenically distinct proteins, only one vlp or vsp gene is transcriptionally active at any one time. Switching between these genes is a mechanism of host immune response evasion. The sequence is that of Variable small protein 24 from Borrelia hermsii.